The following is a 153-amino-acid chain: Ribonuclease H (153 aa).

The 142-residue stretch at 1–142 (MTDQIEIFTD…ADELARRGVD (142 aa)) folds into the RNase H type-1 domain. Positions 10, 48, 70, and 134 each coordinate Mg(2+).

Belongs to the RNase H family. In terms of assembly, monomer. Mg(2+) serves as cofactor.

It is found in the cytoplasm. The catalysed reaction is Endonucleolytic cleavage to 5'-phosphomonoester.. Its function is as follows. Endonuclease that specifically degrades the RNA of RNA-DNA hybrids. The sequence is that of Ribonuclease H from Aromatoleum aromaticum (strain DSM 19018 / LMG 30748 / EbN1) (Azoarcus sp. (strain EbN1)).